Reading from the N-terminus, the 51-residue chain is MRDKIRLVSSAGTGYFYTTTKNKRTMPEKMEIKKFDPKIRQHVIFKEAKIK.

Belongs to the bacterial ribosomal protein bL33 family.

This is Large ribosomal subunit protein bL33 from Acinetobacter baylyi (strain ATCC 33305 / BD413 / ADP1).